A 170-amino-acid polypeptide reads, in one-letter code: Protein-lysine myristoyltransferase HlyC (170 aa).

Catalysis depends on residues His-23 and Asp-92. His-151 serves as a coordination point for heme.

This sequence belongs to the RTX toxin acyltransferase family. In terms of assembly, monomer. Post-translationally, proteolytically cleaved by the protease systems ClpAP, ClpXP and FtsH, leading to its degradation.

It localises to the cytoplasm. The enzyme catalyses tetradecanoyl-[ACP] + L-lysyl-[protein] = N(6)-tetradecanoyl-L-lysyl-[protein] + holo-[ACP] + H(+). The acyltransferase activity is inhibited by heme. In terms of biological role, protein-lysine myristoyltransferase that catalyzes myristoylation of the protoxin (HlyA) at two internal lysine residues, thereby converting it to the active toxin. This is Protein-lysine myristoyltransferase HlyC from Escherichia coli.